Here is a 417-residue protein sequence, read N- to C-terminus: GTP-binding protein YPT11 (417 aa).

Positions 1 to 34 are disordered; sequence MSQRKRYSLNVVTSPSIPSPTPSAPIRTNESNWE. GTP-binding positions include 97-104, 228-232, and 292-295; these read GDANVGKT, DTAGQ, and NKID. Residues Cys-415 and Cys-416 are each lipidated (S-geranylgeranyl cysteine).

Belongs to the small GTPase superfamily. Rab family. Interacts with MYO2 (via C-terminal tail domain). Interacts with YIF1, YIP3, YIP4 and YIP5.

Its subcellular location is the endoplasmic reticulum membrane. It localises to the bud tip. The protein resides in the bud neck. Involved in the positive control of both endoplasmic reticulum (ER) and mitochondrion inheritance during cell divison. Required for the MYO2-dependent retention of newly inherited mitochondria at the bud tip in developing daughter cells. In Saccharomyces cerevisiae (strain AWRI1631) (Baker's yeast), this protein is GTP-binding protein YPT11 (YPT11).